Here is a 223-residue protein sequence, read N- to C-terminus: 2-C-methyl-D-erythritol 4-phosphate cytidylyltransferase (223 aa).

Belongs to the IspD/TarI cytidylyltransferase family. IspD subfamily.

The catalysed reaction is 2-C-methyl-D-erythritol 4-phosphate + CTP + H(+) = 4-CDP-2-C-methyl-D-erythritol + diphosphate. The protein operates within isoprenoid biosynthesis; isopentenyl diphosphate biosynthesis via DXP pathway; isopentenyl diphosphate from 1-deoxy-D-xylulose 5-phosphate: step 2/6. In terms of biological role, catalyzes the formation of 4-diphosphocytidyl-2-C-methyl-D-erythritol from CTP and 2-C-methyl-D-erythritol 4-phosphate (MEP). This chain is 2-C-methyl-D-erythritol 4-phosphate cytidylyltransferase, found in Synechococcus sp. (strain WH7803).